Consider the following 270-residue polypeptide: tRNA pseudouridine synthase A (270 aa).

The Nucleophile role is filled by aspartate 60. The interval 107 to 111 (FHARF) is RNA binding. Tyrosine 118 is a binding site for substrate. The interaction with tRNA stretch occupies residues 168 to 172 (QCQSR).

It belongs to the tRNA pseudouridine synthase TruA family. As to quaternary structure, homodimer.

It catalyses the reaction uridine(38/39/40) in tRNA = pseudouridine(38/39/40) in tRNA. Formation of pseudouridine at positions 38, 39 and 40 in the anticodon stem and loop of transfer RNAs. In Escherichia coli O9:H4 (strain HS), this protein is tRNA pseudouridine synthase A.